An 80-amino-acid polypeptide reads, in one-letter code: Bacteriochlorophyll c-binding protein (80 aa).

H25 contacts a bacteriochlorophyll c. Residues 49 to 80 are disordered; sequence PGVSRSGSGEGAFSSSPSNGFRPKRIRSRFNR. A propeptide spanning residues 54–80 is cleaved from the precursor; it reads SGSGEGAFSSSPSNGFRPKRIRSRFNR. A compositionally biased stretch (basic residues) spans 70 to 80; sequence RPKRIRSRFNR.

This sequence belongs to the BChl C/E-binding protein family.

Its subcellular location is the chlorosome. It is found in the chlorosome envelope. Functionally, component of the photosynthetic apparatus. The light harvesting B740 complex binds bacteriochlorophyll c. This chain is Bacteriochlorophyll c-binding protein (cmsA), found in Chloroflexus aurantiacus (strain ATCC 29366 / DSM 635 / J-10-fl).